Here is a 444-residue protein sequence, read N- to C-terminus: Putative GTP cyclohydrolase URC1 (444 aa).

268–272 (RVHDE) contacts GTP. Cys-273, Cys-284, and Cys-286 together coordinate Zn(2+). 315–317 (EGR) is a GTP binding site. Residue Asp-353 is the Proton acceptor of the active site. Residue Arg-355 is the Nucleophile of the active site. GTP is bound by residues Ser-377 and Lys-382.

This sequence belongs to the GTP cyclohydrolase II family.

The protein localises to the cytoplasm. It is found in the nucleus. Involved in uracil catabolism. This chain is Putative GTP cyclohydrolase URC1 (URC1), found in Lachancea kluyveri (Yeast).